The primary structure comprises 200 residues: MAKVLVLYYSMYGHIETMADAVAEGARSVPGTEVTIKRVAETIPADQAAAHGVKLDQKAPVATPDELANYDAIIFGTPTRFGNMAGQMRTFLDQTGGLWMKGALVGKIGSVFASTGTQHGGQETTITSFHSTLLHQGMVIVGVPYSCAGLVNMTEITGGTPYGATTLAGADGSRQPSQNELDIARFQGKHVASLALKIAG.

Positions 4–191 (VLVLYYSMYG…DIARFQGKHV (188 aa)) constitute a Flavodoxin-like domain. FMN is bound by residues 10–15 (SMYGHI) and 79–81 (TRF). Tyrosine 12 lines the NAD(+) pocket. Residue tryptophan 99 participates in substrate binding. Residues 114–120 (STGTQHG) and histidine 135 contribute to the FMN site.

Belongs to the WrbA family. The cofactor is FMN.

It carries out the reaction a quinone + NADH + H(+) = a quinol + NAD(+). The catalysed reaction is a quinone + NADPH + H(+) = a quinol + NADP(+). In Paraburkholderia phytofirmans (strain DSM 17436 / LMG 22146 / PsJN) (Burkholderia phytofirmans), this protein is NAD(P)H dehydrogenase (quinone).